Consider the following 366-residue polypeptide: BIIDXI-like protein At5g11420 (366 aa).

The signal sequence occupies residues 1 to 22 (MKGGSLSFLFVLLIATITSVIC). Asn-98, Asn-122, and Asn-209 each carry an N-linked (GlcNAc...) asparagine glycan.

Interacts with PME3.

It is found in the secreted. It localises to the cell wall. In terms of biological role, together with BIIDXI, acts as a positive regulator of PME3 activity during several developmental processes, including seed germination and endosperm (testa) rupture at the micropyle, probably by modulating the pectin status in cell walls. This chain is BIIDXI-like protein At5g11420, found in Arabidopsis thaliana (Mouse-ear cress).